A 336-amino-acid polypeptide reads, in one-letter code: Gastrula zinc finger protein XlCGF57.1 (336 aa).

11 consecutive C2H2-type zinc fingers follow at residues 6–28 (YTCT…MKIH), 34–56 (FICT…MKTH), 62–84 (FTCT…LTIH), 90–112 (FSCT…MKTH), 118–140 (FTCT…MKTH), 146–168 (FTCT…LKIH), 174–196 (FTCT…LKIH), 202–224 (FTCT…MKIH), 230–252 (FSCT…LTMH), 258–280 (FTCT…TKIH), and 286–308 (FSCT…LKIH).

Belongs to the krueppel C2H2-type zinc-finger protein family.

The protein resides in the nucleus. In terms of biological role, may be involved in transcriptional regulation. The sequence is that of Gastrula zinc finger protein XlCGF57.1 from Xenopus laevis (African clawed frog).